The following is a 324-amino-acid chain: Annexin A10 (324 aa).

Annexin repeat units follow at residues F17–Y88, P89–Q160, A171–L243, and D247–A318.

Belongs to the annexin family.

The polypeptide is Annexin A10 (ANXA10) (Homo sapiens (Human)).